Reading from the N-terminus, the 499-residue chain is Glycerol kinase (499 aa).

Threonine 13 serves as a coordination point for ADP. Residues threonine 13, threonine 14, and serine 15 each coordinate ATP. Position 13 (threonine 13) interacts with sn-glycerol 3-phosphate. Arginine 17 lines the ADP pocket. 4 residues coordinate sn-glycerol 3-phosphate: arginine 83, glutamate 84, tyrosine 135, and aspartate 244. Glycerol is bound by residues arginine 83, glutamate 84, tyrosine 135, aspartate 244, and glutamine 245. 2 residues coordinate ADP: threonine 266 and glycine 309. Positions 266, 309, 313, and 410 each coordinate ATP. Residues glycine 410 and asparagine 414 each contribute to the ADP site.

It belongs to the FGGY kinase family. In terms of assembly, homotetramer and homodimer (in equilibrium).

It carries out the reaction glycerol + ATP = sn-glycerol 3-phosphate + ADP + H(+). It functions in the pathway polyol metabolism; glycerol degradation via glycerol kinase pathway; sn-glycerol 3-phosphate from glycerol: step 1/1. Activated by phosphorylation and inhibited by fructose 1,6-bisphosphate (FBP). In terms of biological role, key enzyme in the regulation of glycerol uptake and metabolism. Catalyzes the phosphorylation of glycerol to yield sn-glycerol 3-phosphate. The protein is Glycerol kinase of Brevibacillus brevis (strain 47 / JCM 6285 / NBRC 100599).